The following is a 144-amino-acid chain: Putative acetyltransferase SAOUHSC_00995 (144 aa).

Residues M1–T141 enclose the N-acetyltransferase domain. Residues V71 to V73, G79, and P112 to Y114 each bind CoA.

The protein belongs to the UPF0039 (ElaA) family.

Functionally, could catalyze the transfer of an acetyl group from acetyl coenzyme A (AcCoA) to an acceptor substrate and release both CoA and the acetylated product. The polypeptide is Putative acetyltransferase SAOUHSC_00995 (Staphylococcus aureus (strain NCTC 8325 / PS 47)).